A 597-amino-acid polypeptide reads, in one-letter code: MAARKGTDSETEDGGWVLIEADCSEVDSADETSENASNVSDLVDNASIAETQGLSLQLFQQQELTECEEQLQQLKRKFVQSPQSRDLCSLSPQLASISLTPRTSKKVKKQLFATDSGIQSSNEADDSLEGQRQVEPLPGREENGADALFKVRDKRAFLYSKFKSSFGISFTDLTRVYNSDKTCSSDWVVCLYHVSDDRREAGKTLLQDHCEYFFLHSMGFCTLLLLCLFVPKCRNTLFKLCRSLFHISNVQMLADPPKTRSPAVALYWYKKGFASGTFTHGELPSWIAQQTLITHHLAAEKTFDLSEMVQWAYDNDLKDESEIAYKYAALAETDENALAFLKSNNQPKHVKDCATMCRYYKKAEMKRLSMSQWIDERCKATDDGPGDWKEVVKFLRHQGIEFILFLADFKRFLRGRPKKNCLVFWGPPNTGKSMFCMSLLSFLHGVVISYVNSKSHFWLQPLTEGKMGLLDDATRPCWLYIDTYLRNALDGNTFSVDCKHKAPLQLKCPPLLITTNVNVCGDEKFKYLRSRCSFFHFPQEFPLDDNGNPGFQLNDQSWASFFKRFWKHLDLSDPEDGEDGETQRGLRLTARGTTESV.

The short motif at 75 to 77 is the Nuclear localization signal element; that stretch reads KRK. 3 positions are modified to phosphoserine; by host: Ser81, Ser91, and Ser104. The Nuclear export signal motif lies at 90–99; sequence LSPQLASISL. The segment at 119–141 is disordered; sequence QSSNEADDSLEGQRQVEPLPGRE. The segment at 137-300 is DNA-binding region; it reads LPGREENGAD…TLITHHLAAE (164 aa). One can recognise an SF3 helicase domain in the interval 400 to 550; that stretch reads IEFILFLADF…FPLDDNGNPG (151 aa). An ATP-binding site is contributed by 426–433; the sequence is GPPNTGKS. Residue Lys507 forms a Glycyl lysine isopeptide (Lys-Gly) (interchain with G-Cter in SUMO) linkage. The segment at 574–597 is disordered; sequence PEDGEDGETQRGLRLTARGTTESV.

The protein belongs to the papillomaviridae E1 protein family. As to quaternary structure, can form hexamers. Interacts with E2 protein; this interaction increases E1 DNA binding specificity. Interacts with host DNA polymerase subunit POLA2. Interacts with host single stranded DNA-binding protein RPA1. Interacts with host TOP1; this interaction stimulates the enzymatic activity of TOP1. In terms of processing, phosphorylated. Sumoylated.

Its subcellular location is the host nucleus. The enzyme catalyses Couples ATP hydrolysis with the unwinding of duplex DNA by translocating in the 3'-5' direction.. The catalysed reaction is ATP + H2O = ADP + phosphate + H(+). In terms of biological role, ATP-dependent DNA 3'-5' helicase required for initiation of viral DNA replication. It forms a complex with the viral E2 protein. The E1-E2 complex binds to the replication origin which contains binding sites for both proteins. During the initial step, a dimer of E1 interacts with a dimer of protein E2 leading to a complex that binds the viral origin of replication with high specificity. Then, a second dimer of E1 displaces the E2 dimer in an ATP-dependent manner to form the E1 tetramer. Following this, two E1 monomers are added to each half of the site, which results in the formation of two E1 trimers on the viral ori. Subsequently, two hexamers will be created. The double hexamer acts as a bi-directional helicase machinery and unwinds the viral DNA and then recruits the host DNA polymerase to start replication. The polypeptide is Replication protein E1 (Canis lupus familiaris (Dog)).